Reading from the N-terminus, the 153-residue chain is Satratoxin biosynthesis SC2 cluster transcription factor SAT15 (153 aa).

The protein localises to the nucleus. Transcriptional regulator that may regulate the expression of the satratoxin biosynthesis SC2 cluster, one of the 3 clusters involved in the biosynthesis of satratoxins, trichothecene mycotoxins that are associated with human food poisonings. The chain is Satratoxin biosynthesis SC2 cluster transcription factor SAT15 from Stachybotrys chartarum (strain CBS 109288 / IBT 7711) (Toxic black mold).